A 338-amino-acid chain; its full sequence is Lipoate-protein ligase A (338 aa).

Positions 29–216 constitute a BPL/LPL catalytic domain; the sequence is PATQRVLFLW…AFFAHYGERV (188 aa). ATP contacts are provided by residues Arg71, 76 to 79, and Lys134; that span reads GAVF. (R)-lipoate is bound at residue Lys134.

The protein belongs to the LplA family. As to quaternary structure, monomer.

The protein localises to the cytoplasm. The enzyme catalyses L-lysyl-[lipoyl-carrier protein] + (R)-lipoate + ATP = N(6)-[(R)-lipoyl]-L-lysyl-[lipoyl-carrier protein] + AMP + diphosphate + H(+). It participates in protein modification; protein lipoylation via exogenous pathway; protein N(6)-(lipoyl)lysine from lipoate: step 1/2. The protein operates within protein modification; protein lipoylation via exogenous pathway; protein N(6)-(lipoyl)lysine from lipoate: step 2/2. In terms of biological role, catalyzes both the ATP-dependent activation of exogenously supplied lipoate to lipoyl-AMP and the transfer of the activated lipoyl onto the lipoyl domains of lipoate-dependent enzymes. The polypeptide is Lipoate-protein ligase A (Escherichia coli O9:H4 (strain HS)).